A 374-amino-acid chain; its full sequence is MGSKVSVEESVRVVIVGGGFAGIAAASQLKSFGIPFLLVDMKDAFHHNVAALRACVESGFARKTFISYKDSFHDSFKQGKVVGINLQTQLVILESNEELSFSHLIIATGSNGPFPGKFNEVISKDQAIQIYENLVEEIQKAKHVVVVGGGSAGVEMAAEVKTDYPEKEVTLIHSKIALADVQLQPSVRRTVKEILLRKGVRLILAQKVTNLDQVTPNVAQENMELQLDKDSEVVNCDLVLCCIGLKVSSSSYRSALGDKMAEDGSLIVNDYLQVQGHENVYAVGDCAYINEPKMAYYAGIHARVAATNVRNSLIGKSLKSYIPGALSMLLSMGRNDGVGQFNGYYLGRCFVTMAKSRDIFVSKSWKEMGQTMPR.

Gly2 carries N-myristoyl glycine lipidation. The chain crosses the membrane as a helical span at residues 13 to 35 (VVIVGGGFAGIAAASQLKSFGIP). Residues 17-21 (GGGFA), Arg53, and Val81 each bind 6-hydroxy-FAD. The residue at position 167 (Lys167) is an N6-acetyllysine. Asp285 contributes to the 6-hydroxy-FAD binding site.

This sequence belongs to the FAD-dependent oxidoreductase family. 6-hydroxy-FAD is required as a cofactor. Post-translationally, N-myristoylation at Gly-2 mediates the recruitment to lipid droplets and plasma membrane. In terms of processing, acetylation at Lys-167 prevents AIFM2 ubiquitination and degradation, thereby inhibiting ferroptosis. KAT2B mediates acetylation at Lys-167, while HDAC3 removes it. Ubiquitinated. AIFM2 undergoes 'Lys-29'-ubiquitination and proteasomal degradation, which is inhibited by acetylation at Lys-167.

The protein resides in the lipid droplet. It localises to the cell membrane. It is found in the cytoplasm. Its subcellular location is the mitochondrion membrane. The protein localises to the nucleus. It catalyses the reaction ubiquinone-10 + NADH + H(+) = ubiquinol-10 + NAD(+). The enzyme catalyses phylloquinone + NADH + H(+) = phylloquinol + NAD(+). It carries out the reaction menaquinone-4 + NADH + H(+) = menaquinol-4 + NAD(+). The catalysed reaction is menadione + NADH + H(+) = menadiol + NAD(+). The modification by 4-hydroxy-2-nonenal (HNE) adduction in mitochondria results in loss of the oxidoreductase activity and activation of a novel function in mitochondrial oxidative stress signaling. In terms of biological role, a NAD(P)H-dependent oxidoreductase that acts as a key inhibitor of ferroptosis. At the plasma membrane, catalyzes reduction of coenzyme Q/ubiquinone-10 to ubiquinol-10, a lipophilic radical-trapping antioxidant that prevents lipid oxidative damage and consequently ferroptosis. Acts in parallel to GPX4 to suppress phospholipid peroxidation and ferroptosis. This anti-ferroptotic function is independent of cellular glutathione levels. Also acts as a potent radical-trapping antioxidant by mediating warfarin-resistant vitamin K reduction in the canonical vitamin K cycle: catalyzes NAD(P)H-dependent reduction of vitamin K (phylloquinone, menaquinone-4 and menadione) to hydroquinone forms. Hydroquinones act as potent radical-trapping antioxidants inhibitor of phospholipid peroxidation and ferroptosis. May play a role in mitochondrial stress signaling. Upon oxidative stress, associates with the lipid peroxidation end product 4-hydroxy-2-nonenal (HNE) forming a lipid adduct devoid of oxidoreductase activity, which then translocates from mitochondria into the nucleus triggering DNA damage and cell death. This Xenopus laevis (African clawed frog) protein is Ferroptosis suppressor protein 1 (aifm2).